The primary structure comprises 440 residues: UDP-N-acetylmuramoylalanine--D-glutamate ligase (440 aa).

Residue 115–121 (GSNGKST) participates in ATP binding.

It belongs to the MurCDEF family.

The protein localises to the cytoplasm. The enzyme catalyses UDP-N-acetyl-alpha-D-muramoyl-L-alanine + D-glutamate + ATP = UDP-N-acetyl-alpha-D-muramoyl-L-alanyl-D-glutamate + ADP + phosphate + H(+). It functions in the pathway cell wall biogenesis; peptidoglycan biosynthesis. Its function is as follows. Cell wall formation. Catalyzes the addition of glutamate to the nucleotide precursor UDP-N-acetylmuramoyl-L-alanine (UMA). The protein is UDP-N-acetylmuramoylalanine--D-glutamate ligase of Vibrio cholerae serotype O1 (strain ATCC 39315 / El Tor Inaba N16961).